Here is a 514-residue protein sequence, read N- to C-terminus: MSVSKKPMVLVILDGYGYREEQQDNAILNAKTPVMDALWAKRPHTLIDASGLEVGLPDRQMGNSEVGHVNLGAGRIVYQDLTRLDVEIKERTFFANPVLTNAVDQAKNAGKAVHIMGLLSAGGVHSHEDHIMAMVELAAERGAEKIYLHAFLDGRDTPPRSAEASLKKFEDKFAALGKGRVASIVGRYYAMDRDNRWDRVEKAYDLMTLAQGEFQADTAVAGLQAAYARDENDEFVKATVILAEGQADAAMEDGDTLIFMNFRADRAREITRAFVNADFDGFARKKVVNLNFVMLTEYAADIKTAVAYPPASLVNTFGEWMAKNDKTQLRISETEKYAHVTFFFNGGVEEPFAGEERILINSPKVATYDLQPEMSSAELTEKLVAAIESGKYDTIICNYPNGDMVGHTGVMEAAIKAVEALDNCIEQVTKAVESVGGQLLITADHGNAEQMRDPATGQAHTAHTNLPVPLIYVGEKNVKAVEGGKLSDIAPTMLSLMGMEIPQEMTGKPLFIVE.

Residues Asp14 and Ser64 each contribute to the Mn(2+) site. The Phosphoserine intermediate role is filled by Ser64. Substrate contacts are provided by residues His125, 155 to 156, Arg187, Arg193, 263 to 266, and Lys336; these read RD and RADR. The Mn(2+) site is built by Asp403, His407, Asp444, His445, and His463.

Belongs to the BPG-independent phosphoglycerate mutase family. Monomer. Mn(2+) serves as cofactor.

The enzyme catalyses (2R)-2-phosphoglycerate = (2R)-3-phosphoglycerate. The protein operates within carbohydrate degradation; glycolysis; pyruvate from D-glyceraldehyde 3-phosphate: step 3/5. In terms of biological role, catalyzes the interconversion of 2-phosphoglycerate and 3-phosphoglycerate. This Salmonella paratyphi B (strain ATCC BAA-1250 / SPB7) protein is 2,3-bisphosphoglycerate-independent phosphoglycerate mutase.